A 202-amino-acid chain; its full sequence is Glycerol-3-phosphate acyltransferase (202 aa).

The next 6 helical transmembrane spans lie at 2–22 (MIIVMLLLSYLIGAFPSGFVI), 54–74 (FLVTFLDIFKGFITVFFPLWL), 85–105 (FFTNGLIVGLFAILGHVYPVY), 120–140 (VVLGVNPILLLILAIIFFIIL), 141–161 (KIFKYVSLASIVAAICCVIGS), and 162–182 (LIIQDYILLVVSFLVSIILII).

The protein belongs to the PlsY family. Probably interacts with PlsX.

It is found in the cell membrane. It carries out the reaction an acyl phosphate + sn-glycerol 3-phosphate = a 1-acyl-sn-glycero-3-phosphate + phosphate. Its pathway is lipid metabolism; phospholipid metabolism. In terms of biological role, catalyzes the transfer of an acyl group from acyl-phosphate (acyl-PO(4)) to glycerol-3-phosphate (G3P) to form lysophosphatidic acid (LPA). This enzyme utilizes acyl-phosphate as fatty acyl donor, but not acyl-CoA or acyl-ACP. This chain is Glycerol-3-phosphate acyltransferase, found in Staphylococcus aureus (strain bovine RF122 / ET3-1).